A 416-amino-acid polypeptide reads, in one-letter code: Interleukin-1 receptor type 2 (416 aa).

The N-terminal stretch at 1–13 (MFILLVLVTGVSA) is a signal peptide. At 14-355 (FTTPAVVHTG…FQSLHTTVKE (342 aa)) the chain is on the extracellular side. 3 Ig-like C2-type domains span residues 29 to 136 (PVTS…LELK), 146 to 233 (PLVS…YNIT), and 249 to 357 (PVII…KEVS). Intrachain disulfides connect Cys-42/Cys-128, Cys-64/Cys-120, and Cys-164/Cys-219. Residues Asn-124, Asn-208, Asn-231, and Asn-289 are each glycosylated (N-linked (GlcNAc...) asparagine). Residues Cys-270 and Cys-338 are joined by a disulfide bond. A helical transmembrane segment spans residues 356–381 (VSSTFSWGIALAPLSLIILVVGAIWI). Residues 382–416 (RRRCKRQAGKTYGLTKLPTDNQDFPSSPNQIKEMK) are Cytoplasmic-facing. The tract at residues 396–416 (TKLPTDNQDFPSSPNQIKEMK) is disordered. Positions 399–416 (PTDNQDFPSSPNQIKEMK) are enriched in polar residues.

It belongs to the interleukin-1 receptor family. As to quaternary structure, associates with IL1RAP to form a non-signaling interleukin-1 receptor complex. In terms of processing, a soluble form (sIL1R2) can also be produced by proteolytic cleavage at the cell surface (shedding) involving a metalloproteinase.

It is found in the membrane. It localises to the cell membrane. The protein localises to the secreted. Its function is as follows. Non-signaling receptor for IL1A, IL1B and IL1RN. Reduces IL1B activities. Serves as a decoy receptor by competitive binding to IL1B and preventing its binding to IL1R1. Also modulates cellular response through non-signaling association with IL1RAP after binding to IL1B. IL1R2 (membrane and secreted forms) preferentially binds IL1B and poorly IL1A and IL1RN. The secreted IL1R2 recruits secreted IL1RAP with high affinity; this complex formation may be the dominant mechanism for neutralization of IL1B by secreted/soluble receptors. The sequence is that of Interleukin-1 receptor type 2 (Il1r2) from Rattus norvegicus (Rat).